A 201-amino-acid polypeptide reads, in one-letter code: Large ribosomal subunit protein uL4 (201 aa).

Residues 45-73 form a disordered region; sequence AQKTRAEVTGSGKKPWRQKGTGRARAGSV.

This sequence belongs to the universal ribosomal protein uL4 family. Part of the 50S ribosomal subunit.

One of the primary rRNA binding proteins, this protein initially binds near the 5'-end of the 23S rRNA. It is important during the early stages of 50S assembly. It makes multiple contacts with different domains of the 23S rRNA in the assembled 50S subunit and ribosome. Its function is as follows. Forms part of the polypeptide exit tunnel. The chain is Large ribosomal subunit protein uL4 from Yersinia pseudotuberculosis serotype O:1b (strain IP 31758).